The following is a 481-amino-acid chain: uncharacterized protein (481 aa).

11 helical membrane passes run 14-34, 46-66, 90-110, 134-154, 167-187, 218-238, 258-278, 303-323, 377-397, 411-431, and 446-466; these read LGFCSVVMLGINSIIGAGIFL, FAPMAYVLAGIFAGVVAIVFA, IGIYVGVTHAITASIAWGVLA, FSVKTLTFLGFIGVLLAINLF, TVGKAFALSAFIVGGLWIITT, FSSMALATIVALYAFTGFESI, IAIFSVGAIYLLTLTVAMLLG, IIVVGALISMFGINVAASFGA, LAVIARFVQFIIVPIALIALA, AFTDKVLPLVAIVVSVGLAVS, and YFSIALIVITFIVVPAMAYLH.

Belongs to the amino acid-polyamine-organocation (APC) superfamily.

The protein resides in the cell membrane. Functionally, probable amino-acid or metabolite transport protein. This is an uncharacterized protein from Mycobacterium bovis (strain ATCC BAA-935 / AF2122/97).